Reading from the N-terminus, the 632-residue chain is 1-deoxy-D-xylulose-5-phosphate synthase (632 aa).

Thiamine diphosphate-binding positions include H77 and 118 to 120 (GHS). A Mg(2+)-binding site is contributed by D149. Thiamine diphosphate contacts are provided by residues 150-151 (GA), N178, Y289, and E372. N178 provides a ligand contact to Mg(2+).

The protein belongs to the transketolase family. DXPS subfamily. Homodimer. Mg(2+) is required as a cofactor. Thiamine diphosphate serves as cofactor.

The enzyme catalyses D-glyceraldehyde 3-phosphate + pyruvate + H(+) = 1-deoxy-D-xylulose 5-phosphate + CO2. It participates in metabolic intermediate biosynthesis; 1-deoxy-D-xylulose 5-phosphate biosynthesis; 1-deoxy-D-xylulose 5-phosphate from D-glyceraldehyde 3-phosphate and pyruvate: step 1/1. Its function is as follows. Catalyzes the acyloin condensation reaction between C atoms 2 and 3 of pyruvate and glyceraldehyde 3-phosphate to yield 1-deoxy-D-xylulose-5-phosphate (DXP). This is 1-deoxy-D-xylulose-5-phosphate synthase from Listeria innocua serovar 6a (strain ATCC BAA-680 / CLIP 11262).